Here is a 383-residue protein sequence, read N- to C-terminus: Pantothenate kinase 1 (383 aa).

It belongs to the type II pantothenate kinase family. As to expression, highly expressed in leaves and developing seeds. Expressed in roots, stems and flowers.

It carries out the reaction (R)-pantothenate + ATP = (R)-4'-phosphopantothenate + ADP + H(+). Its pathway is cofactor biosynthesis; coenzyme A biosynthesis; CoA from (R)-pantothenate: step 1/5. Regulated by feedback inhibition by malonyl-CoA. In terms of biological role, catalyzes the phosphorylation of pantothenate the first step in CoA biosynthesis. May play a role in the physiological regulation of the intracellular CoA concentration. Functionally redudant with PANK2. This chain is Pantothenate kinase 1 (PANK1), found in Arabidopsis thaliana (Mouse-ear cress).